Consider the following 749-residue polypeptide: Homeobox-leucine zipper protein ROC7 (749 aa).

A disordered region spans residues 26–98; sequence LDQHQQHQHQ…KKRYHRHTQH (73 aa). The span at 46 to 57 shows a compositional bias: basic and acidic residues; sequence SDGRAPRDELEM. Gly residues predominate over residues 68 to 79; sequence SGGGGGGGGSGG. Over residues 86-97 the composition is skewed to basic residues; sequence RPRKKRYHRHTQ. Residues 88–147 constitute a DNA-binding region (homeobox); that stretch reads RKKRYHRHTQHQIQELEAFFKECPHPDDKQRKELSRELGLEPLQVKFWFQNKRTQMKTQH. Positions 137–218 form a coiled coil; that stretch reads QNKRTQMKTQ…DRISAIAAKY (82 aa). An START domain is found at 256–494; the sequence is ADFDKPLVIE…LERQCERLAS (239 aa).

Belongs to the HD-ZIP homeobox family. Class IV subfamily.

It is found in the nucleus. Its function is as follows. Probable transcription factor. This is Homeobox-leucine zipper protein ROC7 (ROC7) from Oryza sativa subsp. japonica (Rice).